The following is a 90-amino-acid chain: Small ribosomal subunit protein bS20 (90 aa).

The protein belongs to the bacterial ribosomal protein bS20 family.

Functionally, binds directly to 16S ribosomal RNA. This chain is Small ribosomal subunit protein bS20, found in Mesomycoplasma hyopneumoniae (strain 232) (Mycoplasma hyopneumoniae).